A 496-amino-acid chain; its full sequence is Probable cytosol aminopeptidase (496 aa).

Positions 257 and 262 each coordinate Mn(2+). Lys269 is a catalytic residue. Positions 281, 341, and 343 each coordinate Mn(2+). The active site involves Arg345.

It belongs to the peptidase M17 family. Mn(2+) is required as a cofactor.

The protein resides in the cytoplasm. The enzyme catalyses Release of an N-terminal amino acid, Xaa-|-Yaa-, in which Xaa is preferably Leu, but may be other amino acids including Pro although not Arg or Lys, and Yaa may be Pro. Amino acid amides and methyl esters are also readily hydrolyzed, but rates on arylamides are exceedingly low.. It carries out the reaction Release of an N-terminal amino acid, preferentially leucine, but not glutamic or aspartic acids.. Its function is as follows. Presumably involved in the processing and regular turnover of intracellular proteins. Catalyzes the removal of unsubstituted N-terminal amino acids from various peptides. This chain is Probable cytosol aminopeptidase, found in Prochlorococcus marinus (strain SARG / CCMP1375 / SS120).